We begin with the raw amino-acid sequence, 335 residues long: Antigen-presenting glycoprotein CD1d (335 aa).

The N-terminal stretch at 1–19 is a signal peptide; that stretch reads MGCLLFLLLWALLQAWGSA. At 20-301 the chain is on the extracellular side; sequence EVPQRLFPLR…VLYWGGSYTS (282 aa). N-linked (GlcNAc...) asparagine glycosylation is found at Asn38 and Asn60. Asp98 provides a ligand contact to a D-galactosylceramide. Disulfide bonds link Cys120-Cys184 and Cys224-Cys279. An N-linked (GlcNAc...) asparagine glycan is attached at Asn126. 169–172 serves as a coordination point for a D-galactosylceramide; the sequence is DKWT. Asn181 carries an N-linked (GlcNAc...) asparagine glycan. The region spanning 185-292 is the Ig-like domain; the sequence is PQFVSGLLES…HSSLEGQDIV (108 aa). The helical transmembrane segment at 302–322 threads the bilayer; it reads MGLIALAVLACLLFLLIVGFT. The Cytoplasmic segment spans residues 323 to 335; sequence SRFKRQTSYQGVL. The Internalization signal motif lies at 331 to 334; that stretch reads YQGV.

As to quaternary structure, heterodimer with B2M (beta-2-microglobulin). Interacts with MHC II. In terms of tissue distribution, expressed on cortical thymocytes, on certain T-cell leukemias, and in various other tissues.

The protein resides in the cell membrane. It localises to the basolateral cell membrane. Its subcellular location is the endosome membrane. The protein localises to the lysosome membrane. It is found in the endoplasmic reticulum membrane. Antigen-presenting protein that binds self and non-self glycolipids and presents them to T-cell receptors on natural killer T-cells. The sequence is that of Antigen-presenting glycoprotein CD1d (CD1D) from Homo sapiens (Human).